The chain runs to 147 residues: GLCPDKYKRYSLQHSFCLPTCVSCAFYSKDVRYWLKNYILYQHNNLRNVVASGRSYGVDHVPRICLTVVTRIGCGYLFRKYTNVICNYGPRGNVEGEEIYKGGDICSACPANTCCGDGCKYHGLCKFGEPNLPEIFYCGFNGESDCR.

The protein belongs to the CRISP family. In terms of tissue distribution, expressed by the venom gland.

It is found in the secreted. This Phoneutria keyserlingi (Brazilian wandering spider) protein is CRISP-1.